The following is a 466-amino-acid chain: Ribulose bisphosphate carboxylase large chain (466 aa).

Lysine 5 carries the N6,N6,N6-trimethyllysine modification. Substrate is bound by residues asparagine 114 and threonine 164. Lysine 166 serves as the catalytic Proton acceptor. Lysine 168 contributes to the substrate binding site. Mg(2+)-binding residues include lysine 192, aspartate 194, and glutamate 195. An N6-carboxylysine modification is found at lysine 192. Histidine 285 acts as the Proton acceptor in catalysis. 3 residues coordinate substrate: arginine 286, histidine 318, and serine 370.

This sequence belongs to the RuBisCO large chain family. Type I subfamily. In terms of assembly, heterohexadecamer of 8 large chains and 8 small chains; disulfide-linked. The disulfide link is formed within the large subunit homodimers. Mg(2+) serves as cofactor. In terms of processing, the disulfide bond which can form in the large chain dimeric partners within the hexadecamer appears to be associated with oxidative stress and protein turnover.

Its subcellular location is the plastid. The protein localises to the chloroplast. It catalyses the reaction 2 (2R)-3-phosphoglycerate + 2 H(+) = D-ribulose 1,5-bisphosphate + CO2 + H2O. The catalysed reaction is D-ribulose 1,5-bisphosphate + O2 = 2-phosphoglycolate + (2R)-3-phosphoglycerate + 2 H(+). Functionally, ruBisCO catalyzes two reactions: the carboxylation of D-ribulose 1,5-bisphosphate, the primary event in carbon dioxide fixation, as well as the oxidative fragmentation of the pentose substrate in the photorespiration process. Both reactions occur simultaneously and in competition at the same active site. The sequence is that of Ribulose bisphosphate carboxylase large chain from Cercidiphyllum japonicum (Katsura tree).